The primary structure comprises 374 residues: uncharacterized protein (374 aa).

The signal sequence occupies residues 1–26 (MNNLIKAYAAGVMSAAFLFGSEGRVR).

This is an uncharacterized protein from Treponema pallidum (strain Nichols).